We begin with the raw amino-acid sequence, 361 residues long: Phosphoribosylformylglycinamidine cyclo-ligase (361 aa).

This sequence belongs to the AIR synthase family.

Its subcellular location is the cytoplasm. The enzyme catalyses 2-formamido-N(1)-(5-O-phospho-beta-D-ribosyl)acetamidine + ATP = 5-amino-1-(5-phospho-beta-D-ribosyl)imidazole + ADP + phosphate + H(+). It participates in purine metabolism; IMP biosynthesis via de novo pathway; 5-amino-1-(5-phospho-D-ribosyl)imidazole from N(2)-formyl-N(1)-(5-phospho-D-ribosyl)glycinamide: step 2/2. This Bartonella henselae (strain ATCC 49882 / DSM 28221 / CCUG 30454 / Houston 1) (Rochalimaea henselae) protein is Phosphoribosylformylglycinamidine cyclo-ligase.